The primary structure comprises 257 residues: S-methyl-5'-thioadenosine phosphorylase (257 aa).

Phosphate-binding positions include Ser10 and 50–51 (RH). Cys130 and Cys195 form a disulfide bridge. Met180 provides a ligand contact to substrate. Thr181 serves as a coordination point for phosphate. 204-206 (DYD) provides a ligand contact to substrate. Cysteines 246 and 248 form a disulfide.

Belongs to the PNP/MTAP phosphorylase family. MTAP subfamily. In terms of assembly, homohexamer. Dimer of a homotrimer.

The catalysed reaction is S-methyl-5'-thioadenosine + phosphate = 5-(methylsulfanyl)-alpha-D-ribose 1-phosphate + adenine. Its pathway is amino-acid biosynthesis; L-methionine biosynthesis via salvage pathway; S-methyl-5-thio-alpha-D-ribose 1-phosphate from S-methyl-5'-thioadenosine (phosphorylase route): step 1/1. Its function is as follows. Catalyzes the reversible phosphorylation of S-methyl-5'-thioadenosine (MTA) to adenine and 5-methylthioribose-1-phosphate. Involved in the breakdown of MTA, a major by-product of polyamine biosynthesis. Responsible for the first step in the methionine salvage pathway after MTA has been generated from S-adenosylmethionine. Has broad substrate specificity with 6-aminopurine nucleosides as preferred substrates. The chain is S-methyl-5'-thioadenosine phosphorylase from Pyrococcus furiosus (strain ATCC 43587 / DSM 3638 / JCM 8422 / Vc1).